A 296-amino-acid chain; its full sequence is Glycine--tRNA ligase alpha subunit (296 aa).

The protein belongs to the class-II aminoacyl-tRNA synthetase family. Tetramer of two alpha and two beta subunits.

Its subcellular location is the cytoplasm. It carries out the reaction tRNA(Gly) + glycine + ATP = glycyl-tRNA(Gly) + AMP + diphosphate. This Exiguobacterium sibiricum (strain DSM 17290 / CCUG 55495 / CIP 109462 / JCM 13490 / 255-15) protein is Glycine--tRNA ligase alpha subunit.